Here is a 338-residue protein sequence, read N- to C-terminus: UDP-3-O-acylglucosamine N-acyltransferase (338 aa).

Histidine 239 serves as the catalytic Proton acceptor.

This sequence belongs to the transferase hexapeptide repeat family. LpxD subfamily. In terms of assembly, homotrimer.

The catalysed reaction is a UDP-3-O-[(3R)-3-hydroxyacyl]-alpha-D-glucosamine + a (3R)-hydroxyacyl-[ACP] = a UDP-2-N,3-O-bis[(3R)-3-hydroxyacyl]-alpha-D-glucosamine + holo-[ACP] + H(+). It participates in bacterial outer membrane biogenesis; LPS lipid A biosynthesis. Catalyzes the N-acylation of UDP-3-O-acylglucosamine using 3-hydroxyacyl-ACP as the acyl donor. Is involved in the biosynthesis of lipid A, a phosphorylated glycolipid that anchors the lipopolysaccharide to the outer membrane of the cell. This is UDP-3-O-acylglucosamine N-acyltransferase from Thermosynechococcus vestitus (strain NIES-2133 / IAM M-273 / BP-1).